The chain runs to 547 residues: Chaperonin GroEL (547 aa).

ATP is bound by residues 30 to 33, Lys-51, 87 to 91, Gly-415, 480 to 482, and Asp-496; these read TLGP, DGTTT, and NAA. The segment at 525-547 is disordered; the sequence is KPDDKPAMPPMGGGMGGMGGMDF. Over residues 535–547 the composition is skewed to gly residues; that stretch reads MGGGMGGMGGMDF.

It belongs to the chaperonin (HSP60) family. As to quaternary structure, forms a cylinder of 14 subunits composed of two heptameric rings stacked back-to-back. Interacts with the co-chaperonin GroES.

It localises to the cytoplasm. The catalysed reaction is ATP + H2O + a folded polypeptide = ADP + phosphate + an unfolded polypeptide.. Functionally, together with its co-chaperonin GroES, plays an essential role in assisting protein folding. The GroEL-GroES system forms a nano-cage that allows encapsulation of the non-native substrate proteins and provides a physical environment optimized to promote and accelerate protein folding. This is Chaperonin GroEL from Novosphingobium aromaticivorans (strain ATCC 700278 / DSM 12444 / CCUG 56034 / CIP 105152 / NBRC 16084 / F199).